Consider the following 140-residue polypeptide: Short-chain diamines transporter (140 aa).

Transmembrane regions (helical) follow at residues 7–27 (IFHA…AAAL), 36–56 (LALV…IYNL), 79–99 (VGFE…FLEI), and 105–125 (LMLE…FNWL).

This sequence belongs to the proteobacterial antimicrobial compound efflux (PACE) (TC 2.A.117) family.

The protein resides in the cell inner membrane. Mediates the efflux of short-chain diamines when energized by an electrochemical gradient. Confers resistance to chlorhexidine, benzalkonium, proflavine and acriflavine. Mediates efflux of both proflavine and acriflavine via an energy-dependent mechanism. This is Short-chain diamines transporter from Vibrio parahaemolyticus serotype O3:K6 (strain RIMD 2210633).